The following is a 276-amino-acid chain: 3-methyl-2-oxobutanoate hydroxymethyltransferase (276 aa).

Mg(2+)-binding residues include Asp49 and Asp88. 3-methyl-2-oxobutanoate-binding positions include 49–50 (DS), Asp88, and Lys118. Glu120 is a Mg(2+) binding site. Glu187 (proton acceptor) is an active-site residue.

The protein belongs to the PanB family. As to quaternary structure, homodecamer; pentamer of dimers. Mg(2+) serves as cofactor.

The protein localises to the cytoplasm. The catalysed reaction is 3-methyl-2-oxobutanoate + (6R)-5,10-methylene-5,6,7,8-tetrahydrofolate + H2O = 2-dehydropantoate + (6S)-5,6,7,8-tetrahydrofolate. Its pathway is cofactor biosynthesis; (R)-pantothenate biosynthesis; (R)-pantoate from 3-methyl-2-oxobutanoate: step 1/2. Its function is as follows. Catalyzes the reversible reaction in which hydroxymethyl group from 5,10-methylenetetrahydrofolate is transferred onto alpha-ketoisovalerate to form ketopantoate. The chain is 3-methyl-2-oxobutanoate hydroxymethyltransferase from Afipia carboxidovorans (strain ATCC 49405 / DSM 1227 / KCTC 32145 / OM5) (Oligotropha carboxidovorans).